The sequence spans 126 residues: Histone H2B-alpha (126 aa).

Residues Met-1–Lys-34 are disordered. 2 positions are modified to N6-acetyllysine; alternate: Lys-6 and Lys-7. Glycyl lysine isopeptide (Lys-Gly) (interchain with G-Cter in SUMO); alternate cross-links involve residues Lys-6 and Lys-7. Residue Ser-10 is modified to Phosphoserine. Residue Lys-11 is modified to N6-acetyllysine. The span at Ala-17 to Lys-27 shows a compositional bias: basic and acidic residues. Residue Lys-120 forms a Glycyl lysine isopeptide (Lys-Gly) (interchain with G-Cter in ubiquitin) linkage.

It belongs to the histone H2B family. The nucleosome is a histone octamer containing two molecules each of H2A, H2B, H3 and H4 assembled in one H3-H4 heterotetramer and two H2A-H2B heterodimers. The octamer wraps approximately 147 bp of DNA. Interacts with rik1. Monoubiquitinated by the rhp6/ubc2-bre1 complex to form H2BK123ub1. H2BK123ub1 gives a specific tag for epigenetic transcriptional activation and is also prerequisite for H3K4me and H3K79me formation. H2BK123ub1 also modulates the formation of double-strand breaks during meiosis and is a prerequisite for DNA-damage checkpoint activation. In terms of processing, phosphorylated by shk1 to form H2BS10ph during progression through meiotic prophase. May be correlated with chromosome condensation. Post-translationally, acetylation of N-terminal lysines and particularly formation of H2BK11ac has a positive effect on transcription. Sumoylation to form H2BK6su or H2BK7su occurs preferentially near the telomeres and represses gene transcription.

Its subcellular location is the nucleus. The protein localises to the chromosome. Functionally, core component of nucleosome. Nucleosomes wrap and compact DNA into chromatin, limiting DNA accessibility to the cellular machineries which require DNA as a template. Histones thereby play a central role in transcription regulation, DNA repair, DNA replication and chromosomal stability. DNA accessibility is regulated via a complex set of post-translational modifications of histones, also called histone code, and nucleosome remodeling. This Schizosaccharomyces pombe (strain 972 / ATCC 24843) (Fission yeast) protein is Histone H2B-alpha (htb1).